Here is a 493-residue protein sequence, read N- to C-terminus: Angiopoietin-related protein 2 (493 aa).

Positions 1–22 are cleaved as a signal peptide; the sequence is MRPLCVTCWWLGLLAAMGAVAG. Coiled-coil stretches lie at residues 76–115 and 152–206; these read PEVLLENRVHKQELELLNNELLKQKRQIETLQQLVEVDGG and ALEL…HCQR. N-linked (GlcNAc...) asparagine glycosylation is found at N164 and N192. The region spanning 269 to 489 is the Fibrinogen C-terminal domain; sequence DKPSGPWRDC…KVVMMIRPNP (221 aa). 2 disulfide bridges follow: C278/C307 and C430/C443.

In terms of processing, N-glycosylated. In terms of tissue distribution, widely expressed in heart, small intestine, spleen and stomach. Also found in lower levels in colon, ovary, adrenal gland, skeletal muscle and in prostate.

It localises to the secreted. Induces sprouting in endothelial cells through an autocrine and paracrine action. This chain is Angiopoietin-related protein 2 (ANGPTL2), found in Homo sapiens (Human).